A 500-amino-acid polypeptide reads, in one-letter code: Kynurenine 3-monooxygenase acdD (500 aa).

FAD-binding positions include V17 and 36 to 38 (ELR). N50 carries an N-linked (GlcNAc...) asparagine glycan. Residue A58 participates in FAD binding. L-kynurenine-binding residues include R89 and Y106. FAD contacts are provided by R118 and L143. Residue N163 is glycosylated (N-linked (GlcNAc...) asparagine). FAD-binding positions include D321 and 332-335 (QGLN). Residues N392 and Y428 each contribute to the L-kynurenine site. A helical membrane pass occupies residues 451 to 471 (LLLYGSISAIISSAAIVGVLA).

Belongs to the aromatic-ring hydroxylase family. KMO subfamily. Requires FAD as cofactor.

It localises to the mitochondrion outer membrane. The enzyme catalyses L-kynurenine + NADPH + O2 + H(+) = 3-hydroxy-L-kynurenine + NADP(+) + H2O. It functions in the pathway secondary metabolite biosynthesis. The protein operates within cofactor biosynthesis; NAD(+) biosynthesis; quinolinate from L-kynurenine: step 1/3. Functionally, indoleamine 2,3-dioxygenase; part of the gene cluster that mediates the biosynthesis of aspcandine, a pyrrolobenzazepine alkaloid. Initially, the indoleamine 2,3-dioxygenase acdA accepts L-tryptophan and performs the oxidative opening of the indole ring to yield N'-formyl-L-kynurenine, which undergoes the spontaneous deformylation reaction to provide L-kynurenine. The kynurenine 3-monooxygenase acdD then hydroxylates L-kynurenine to afford 3-hydroxy-L-kynurenine. 3-hydroxy-L-kynurenine is activated by the A domain of the NRPS-PKS acdB and subsequently loaded onto the enzyme. The KS domain conducts the decarboxylative condensation of the 3-hydroxy-L-kynurenyl and malonyl moieties, and subsequent nucleophilic attacks by the two amino groups would occur nonenzymatically at two distinct positions, achieving the chain release and the construction of the tricyclic system. Finally, the dehydration reaction completes the biosynthesis to yield aspcandine. In Aspergillus candidus, this protein is Kynurenine 3-monooxygenase acdD.